The primary structure comprises 293 residues: Transcription initiation factor IIB 2 (293 aa).

Residues 1–31 (MKCPYCKTDNAITYDVEKGMYVCTNCASVIE) form a TFIIB-type zinc finger. Residues Cys3, Cys6, Cys23, and Cys26 each coordinate Zn(2+). A run of 2 repeats spans residues 107–193 (SILN…ANSI) and 204–285 (EYIP…DIVD).

This sequence belongs to the TFIIB family.

Functionally, stabilizes TBP binding to an archaeal box-A promoter. Also responsible for recruiting RNA polymerase II to the pre-initiation complex (DNA-TBP-TFIIB). In Saccharolobus solfataricus (strain ATCC 35092 / DSM 1617 / JCM 11322 / P2) (Sulfolobus solfataricus), this protein is Transcription initiation factor IIB 2.